The following is a 348-amino-acid chain: Anthranilate phosphoribosyltransferase (348 aa).

Residues glycine 84, 87–88 (GD), threonine 92, 94–97 (NITT), 112–120 (KHGNRSVSS), and serine 124 contribute to the 5-phospho-alpha-D-ribose 1-diphosphate site. Glycine 84 is an anthranilate binding site. Threonine 96 contacts Mg(2+). Residue asparagine 115 participates in anthranilate binding. Arginine 170 provides a ligand contact to anthranilate. Residues aspartate 228 and glutamate 229 each coordinate Mg(2+).

The protein belongs to the anthranilate phosphoribosyltransferase family. Homodimer. Requires Mg(2+) as cofactor.

It carries out the reaction N-(5-phospho-beta-D-ribosyl)anthranilate + diphosphate = 5-phospho-alpha-D-ribose 1-diphosphate + anthranilate. Its pathway is amino-acid biosynthesis; L-tryptophan biosynthesis; L-tryptophan from chorismate: step 2/5. Functionally, catalyzes the transfer of the phosphoribosyl group of 5-phosphorylribose-1-pyrophosphate (PRPP) to anthranilate to yield N-(5'-phosphoribosyl)-anthranilate (PRA). In Corynebacterium glutamicum (strain R), this protein is Anthranilate phosphoribosyltransferase.